The primary structure comprises 423 residues: Adenylosuccinate synthetase (423 aa).

GTP-binding positions include 12 to 18 (GDEGKGK) and 40 to 42 (GHT). Asp13 serves as the catalytic Proton acceptor. Residues Asp13 and Gly40 each contribute to the Mg(2+) site. IMP contacts are provided by residues 13–16 (DEGK), 38–41 (NAGH), Thr129, Arg143, Gln221, Thr236, and Arg300. The Proton donor role is filled by His41. 296-302 (SVTGRKR) lines the substrate pocket. GTP contacts are provided by residues Arg302, 328 to 330 (KSD), and 408 to 410 (SVG).

Belongs to the adenylosuccinate synthetase family. Homodimer. The cofactor is Mg(2+).

Its subcellular location is the cytoplasm. It catalyses the reaction IMP + L-aspartate + GTP = N(6)-(1,2-dicarboxyethyl)-AMP + GDP + phosphate + 2 H(+). The protein operates within purine metabolism; AMP biosynthesis via de novo pathway; AMP from IMP: step 1/2. Plays an important role in the de novo pathway of purine nucleotide biosynthesis. Catalyzes the first committed step in the biosynthesis of AMP from IMP. This chain is Adenylosuccinate synthetase, found in Bacteroides fragilis (strain ATCC 25285 / DSM 2151 / CCUG 4856 / JCM 11019 / LMG 10263 / NCTC 9343 / Onslow / VPI 2553 / EN-2).